The following is a 238-amino-acid chain: 4-hydroxy-tetrahydrodipicolinate reductase (238 aa).

12–17 (GASGRM) is a binding site for NAD(+). Arg40 is an NADP(+) binding site. NAD(+)-binding positions include 93–95 (GTT) and 117–120 (ASNF). His149 functions as the Proton donor/acceptor in the catalytic mechanism. Position 150 (His150) interacts with (S)-2,3,4,5-tetrahydrodipicolinate. Catalysis depends on Lys153, which acts as the Proton donor. Position 159–160 (159–160 (GT)) interacts with (S)-2,3,4,5-tetrahydrodipicolinate.

The protein belongs to the DapB family.

It is found in the cytoplasm. It carries out the reaction (S)-2,3,4,5-tetrahydrodipicolinate + NAD(+) + H2O = (2S,4S)-4-hydroxy-2,3,4,5-tetrahydrodipicolinate + NADH + H(+). The enzyme catalyses (S)-2,3,4,5-tetrahydrodipicolinate + NADP(+) + H2O = (2S,4S)-4-hydroxy-2,3,4,5-tetrahydrodipicolinate + NADPH + H(+). The protein operates within amino-acid biosynthesis; L-lysine biosynthesis via DAP pathway; (S)-tetrahydrodipicolinate from L-aspartate: step 4/4. Catalyzes the conversion of 4-hydroxy-tetrahydrodipicolinate (HTPA) to tetrahydrodipicolinate. The chain is 4-hydroxy-tetrahydrodipicolinate reductase from Xanthomonas axonopodis pv. citri (strain 306).